A 590-amino-acid chain; its full sequence is (+)-sabinene synthase, chloroplastic (590 aa).

The transit peptide at 1–51 (MSSISINIAMPLNSLHNFERKPSKAWSTSCTAPAARLRASSSLQQEKPHQI) directs the protein to the chloroplast. Residues Asp-343, Asp-347, Asp-487, Thr-491, and Glu-495 each contribute to the Mg(2+) site. Residues 343 to 347 (DDVYD) carry the DDXXD motif motif.

Belongs to the terpene synthase family. As to quaternary structure, monomer. The cofactor is Mg(2+).

Its subcellular location is the plastid. It localises to the chloroplast. The catalysed reaction is (2E)-geranyl diphosphate = (1R,5R)-sabinene + diphosphate. The protein operates within terpene metabolism; sabinene hydrate biosynthesis. Catalyzes the formation of the (-)-3-isothujone precursor sabinene from geranyl diphosphate. The enzyme also produces significant amounts of gamma-terpinene, terpinolene and limonene. This Salvia officinalis (Sage) protein is (+)-sabinene synthase, chloroplastic.